The sequence spans 307 residues: Aspartate carbamoyltransferase catalytic subunit (307 aa).

Carbamoyl phosphate is bound by residues Arg54 and Thr55. Lys83 lines the L-aspartate pocket. The carbamoyl phosphate site is built by Arg104, His132, and Gln135. L-aspartate is bound by residues Arg165 and Arg228. Residues Leu267 and Pro268 each coordinate carbamoyl phosphate.

It belongs to the aspartate/ornithine carbamoyltransferase superfamily. ATCase family. Heterododecamer (2C3:3R2) of six catalytic PyrB chains organized as two trimers (C3), and six regulatory PyrI chains organized as three dimers (R2).

The enzyme catalyses carbamoyl phosphate + L-aspartate = N-carbamoyl-L-aspartate + phosphate + H(+). Its pathway is pyrimidine metabolism; UMP biosynthesis via de novo pathway; (S)-dihydroorotate from bicarbonate: step 2/3. In terms of biological role, catalyzes the condensation of carbamoyl phosphate and aspartate to form carbamoyl aspartate and inorganic phosphate, the committed step in the de novo pyrimidine nucleotide biosynthesis pathway. The chain is Aspartate carbamoyltransferase catalytic subunit from Clostridium acetobutylicum (strain ATCC 824 / DSM 792 / JCM 1419 / IAM 19013 / LMG 5710 / NBRC 13948 / NRRL B-527 / VKM B-1787 / 2291 / W).